Consider the following 1016-residue polypeptide: Nonsense-mediated mRNA decay factor SMG5 (1016 aa).

Residue Ser2 is modified to N-acetylserine. Residues Ser2 and Ser423 each carry the phosphoserine modification. 2 disordered regions span residues 408–561 and 594–637; these read NPVP…PSEA and PTTN…RSCR. Residues 449–466 show a composition bias toward basic residues; that stretch reads KSRKFSRLSCLRRRRHPP. Positions 594–603 are enriched in polar residues; it reads PTTNPHTSAS. Residues 619-628 are compositionally biased toward acidic residues; sequence ASEEGSESEG. Residues 798-841 adopt a coiled-coil conformation; it reads QSEQESLLQQAQAQFRMAQEEARRNRLMRDMAQLRLQLEVSQLE. In terms of domain architecture, PINc spans 872-995; that stretch reads RQLATSGRFI…GPMQAALQAA (124 aa).

As to quaternary structure, interacts with TERT, PPP2CA and SMG1. Part of a complex that contains SMG1, SMG5, SMG7, PPP2CA, a short isoform of UPF3A (isoform UPF3AS, but not isoform UPF3AL) and phosphorylated UPF1. Not detected in complexes that contain unphosphorylated UPF1. Ubiquitous.

The protein resides in the cytoplasm. It localises to the nucleus. Plays a role in nonsense-mediated mRNA decay. Does not have RNase activity by itself. Promotes dephosphorylation of UPF1. Together with SMG7 is thought to provide a link to the mRNA degradation machinery involving exonucleolytic pathways, and to serve as an adapter for UPF1 to protein phosphatase 2A (PP2A), thereby triggering UPF1 dephosphorylation. Necessary for TERT activity. The chain is Nonsense-mediated mRNA decay factor SMG5 from Homo sapiens (Human).